The chain runs to 334 residues: Malate dehydrogenase 2 (334 aa).

Residue 12–18 (GAAGRVA) coordinates NAD(+). Positions 93 and 99 each coordinate substrate. Residues Asn-106, Gln-113, and 130–132 (VGN) contribute to the NAD(+) site. Positions 132 and 166 each coordinate substrate. Catalysis depends on His-191, which acts as the Proton acceptor.

This sequence belongs to the LDH/MDH superfamily. MDH type 2 family.

The enzyme catalyses (S)-malate + NAD(+) = oxaloacetate + NADH + H(+). Catalyzes the reversible oxidation of malate to oxaloacetate. The chain is Malate dehydrogenase 2 from Albidiferax ferrireducens (strain ATCC BAA-621 / DSM 15236 / T118) (Rhodoferax ferrireducens).